We begin with the raw amino-acid sequence, 206 residues long: Fibroblast growth factor 4 (206 aa).

Positions 1-30 (MSGPGTAAVALLPAVLLALLAPWAGRGGAA) are cleaved as a signal peptide.

It belongs to the heparin-binding growth factors family. In terms of assembly, interacts with FGFR1, FGFR2, FGFR3 and FGFR4. Affinity between fibroblast growth factors (FGFs) and their receptors is increased by heparan sulfate glycosaminoglycans that function as coreceptors.

The protein resides in the secreted. Its function is as follows. Plays an important role in the regulation of embryonic development, cell proliferation, and cell differentiation. Required for normal limb and cardiac valve development during embryogenesis. May play a role in embryonic molar tooth bud development via inducing the expression of MSX1, MSX2 and MSX1-mediated expression of SDC1 in dental mesenchyme cells. The sequence is that of Fibroblast growth factor 4 from Homo sapiens (Human).